Reading from the N-terminus, the 275-residue chain is 2,3,4,5-tetrahydropyridine-2,6-dicarboxylate N-succinyltransferase (275 aa).

Arg-108 and Asp-145 together coordinate substrate.

Belongs to the transferase hexapeptide repeat family. As to quaternary structure, homotrimer.

The protein resides in the cytoplasm. The catalysed reaction is (S)-2,3,4,5-tetrahydrodipicolinate + succinyl-CoA + H2O = (S)-2-succinylamino-6-oxoheptanedioate + CoA. It participates in amino-acid biosynthesis; L-lysine biosynthesis via DAP pathway; LL-2,6-diaminopimelate from (S)-tetrahydrodipicolinate (succinylase route): step 1/3. This Jannaschia sp. (strain CCS1) protein is 2,3,4,5-tetrahydropyridine-2,6-dicarboxylate N-succinyltransferase.